The sequence spans 466 residues: Glutamate--tRNA ligase 2 (466 aa).

The short motif at 9-19 (PSPTGSLHLGG) is the 'HIGH' region element. The 'KMSKS' region motif lies at 236 to 240 (KLSKR). Lys239 is a binding site for ATP.

Belongs to the class-I aminoacyl-tRNA synthetase family. Glutamate--tRNA ligase type 1 subfamily. In terms of assembly, monomer.

Its subcellular location is the cytoplasm. It carries out the reaction tRNA(Glu) + L-glutamate + ATP = L-glutamyl-tRNA(Glu) + AMP + diphosphate. Catalyzes the attachment of glutamate to tRNA(Glu) in a two-step reaction: glutamate is first activated by ATP to form Glu-AMP and then transferred to the acceptor end of tRNA(Glu). In Anaplasma marginale (strain St. Maries), this protein is Glutamate--tRNA ligase 2.